Reading from the N-terminus, the 235-residue chain is Thaumatin II (235 aa).

Positions 1 to 22 (MAATTCFFFLFPFLLLLTLSRA) are cleaved as a signal peptide. 8 cysteine pairs are disulfide-bonded: Cys31–Cys226, Cys78–Cys88, Cys93–Cys99, Cys143–Cys215, Cys148–Cys199, Cys156–Cys167, Cys171–Cys180, and Cys181–Cys186. Residues 230–235 (LELEDE) constitute a propeptide, removed in mature form.

Belongs to the thaumatin family.

It localises to the cytoplasmic vesicle. Its function is as follows. Taste-modifying protein; intensely sweet-tasting. It is 100000 times sweeter than sucrose on a molar basis. The sequence is that of Thaumatin II from Thaumatococcus daniellii (Katemfe).